The chain runs to 637 residues: Putative pentatricopeptide repeat-containing protein At5g65820 (637 aa).

12 PPR repeats span residues 146 to 180 (SIEV…NPQL), 182 to 216 (EPEL…GFEP), 217 to 247 (DEYV…MRMR), 251 to 285 (NLRY…GFEP), 286 to 320 (DIVD…GFEP), 321 to 355 (NANC…ECEA), 356 to 390 (DVVT…GLMP), 391 to 425 (SELT…EYHP), 426 to 460 (DIGI…GLSP), 461 to 495 (GVDT…GLFS), 498 to 532 (QYGT…GACE), and 534 to 568 (NVLS…DFMP). The segment covering 616–630 (QDLTEKAKSKQDREG) has biased composition (basic and acidic residues). The interval 616 to 637 (QDLTEKAKSKQDREGKKKQRSR) is disordered.

The protein belongs to the PPR family. P subfamily.

The protein is Putative pentatricopeptide repeat-containing protein At5g65820 of Arabidopsis thaliana (Mouse-ear cress).